Here is a 491-residue protein sequence, read N- to C-terminus: Delayed-rectifier potassium channel regulatory subunit KCNS3 (491 aa).

At M1–L182 the chain is on the cytoplasmic side. A helical transmembrane segment spans residues S183 to V204. At H205–P220 the chain is on the extracellular side. A helical transmembrane segment spans residues V221–A243. Over A244 to P254 the chain is Cytoplasmic. The helical transmembrane segment at L255–K275 threads the bilayer. Topologically, residues E276–M285 are extracellular. The chain crosses the membrane as a helical; Voltage-sensor span at residues G286 to H306. Topologically, residues S307–Y321 are cytoplasmic. A helical transmembrane segment spans residues H322–Y343. Residues S344–I357 lie on the Extracellular side of the membrane. The helical intramembrane region spans P358–T369. The Selectivity filter signature appears at T370–D375. The stretch at T370–H377 is an intramembrane region. At P378 to K384 the chain is on the extracellular side. Residues L385 to Y413 form a helical membrane-spanning segment. Topologically, residues Q414–K491 are cytoplasmic.

It belongs to the potassium channel family. S (TC 1.A.1.2) subfamily. Kv9.3/KCNS3 sub-subfamily. Heterotetramer with KCNB1. Does not form homomultimers. Detected in whole normal term placental and placental chorionic plate arteries and veins. Detected in syncytiotrophoblast and in blood vessel endothelium within intermediate villi and chorionic plate (at protein level). Detected in most tissues, but not in peripheral blood lymphocytes. The highest levels of expression are in lung.

It is found in the cell membrane. Functionally, potassium channel regulatory subunit that modulates the delayed rectifier potassium channel activity of KCNB1 by namely slowing down the deactivation and inactivation time constants. While it does not form functional channel on its own, it can form functional heterotetrameric channels with KCNB1. This is Delayed-rectifier potassium channel regulatory subunit KCNS3 from Homo sapiens (Human).